Consider the following 95-residue polypeptide: Small ribosomal subunit protein uS19 (95 aa).

The disordered stretch occupies residues 75–95 (APTRSFRGHGGKKADKRGKMK). The span at 80–95 (FRGHGGKKADKRGKMK) shows a compositional bias: basic residues.

This sequence belongs to the universal ribosomal protein uS19 family.

Protein S19 forms a complex with S13 that binds strongly to the 16S ribosomal RNA. The polypeptide is Small ribosomal subunit protein uS19 (Roseiflexus sp. (strain RS-1)).